The following is a 252-amino-acid chain: 3-dehydroquinate dehydratase (252 aa).

3-dehydroquinate contacts are provided by residues Ser-21, 46 to 48 (EWR), and Arg-82. The active-site Proton donor/acceptor is His-143. Lys-170 (schiff-base intermediate with substrate) is an active-site residue. 3-dehydroquinate contacts are provided by Arg-213, Ser-232, and Gln-236.

The protein belongs to the type-I 3-dehydroquinase family. In terms of assembly, homodimer.

It catalyses the reaction 3-dehydroquinate = 3-dehydroshikimate + H2O. The protein operates within metabolic intermediate biosynthesis; chorismate biosynthesis; chorismate from D-erythrose 4-phosphate and phosphoenolpyruvate: step 3/7. Functionally, involved in the third step of the chorismate pathway, which leads to the biosynthesis of aromatic amino acids. Catalyzes the cis-dehydration of 3-dehydroquinate (DHQ) and introduces the first double bond of the aromatic ring to yield 3-dehydroshikimate. This Salmonella choleraesuis (strain SC-B67) protein is 3-dehydroquinate dehydratase.